Consider the following 161-residue polypeptide: NADH-quinone oxidoreductase subunit I (161 aa).

4Fe-4S ferredoxin-type domains are found at residues 53 to 82 and 92 to 121; these read RRYP…IEAE and TRYD…EGPN. [4Fe-4S] cluster-binding residues include cysteine 62, cysteine 65, cysteine 68, cysteine 72, cysteine 101, cysteine 104, cysteine 107, and cysteine 111.

The protein belongs to the complex I 23 kDa subunit family. As to quaternary structure, NDH-1 is composed of 14 different subunits. Subunits NuoA, H, J, K, L, M, N constitute the membrane sector of the complex. It depends on [4Fe-4S] cluster as a cofactor.

Its subcellular location is the cell inner membrane. The enzyme catalyses a quinone + NADH + 5 H(+)(in) = a quinol + NAD(+) + 4 H(+)(out). Functionally, NDH-1 shuttles electrons from NADH, via FMN and iron-sulfur (Fe-S) centers, to quinones in the respiratory chain. The immediate electron acceptor for the enzyme in this species is believed to be ubiquinone. Couples the redox reaction to proton translocation (for every two electrons transferred, four hydrogen ions are translocated across the cytoplasmic membrane), and thus conserves the redox energy in a proton gradient. The polypeptide is NADH-quinone oxidoreductase subunit I (Hyphomonas neptunium (strain ATCC 15444)).